The chain runs to 365 residues: MFELNPIRTQLADLTERTQLIRGYLDFDTKVERLEEVNAELEQPEIWNTPEKAQTLGKERSTLEMVVNTINALIQGIEDVEALIELAVEAEDEQTLYEAQIEADELATKLAKLEFQRMFSGPYDATDCYLDLQAGSGGTEAQDWTEMLLRMYLRWAESKGFKTELIEVSDGDVAGLKSATIRITGEYAFGWLRTETGIHRLVRKSPFDSNNRRHTSFAAAFVYPEVDDDVDIEINPADLRIDVYRASGAGGQHVNKTESAVRITHMPSGIVVQCQNGRSQHQNKDQCMKQLRAKLYEMEMMKKNAEKQAMEENKSDIGWGSQIRSYVLDDSRIKDLRTGVENRNTQAVLDGDLDRFIEASLKAGL.

Q252 is modified (N5-methylglutamine).

This sequence belongs to the prokaryotic/mitochondrial release factor family. Methylated by PrmC. Methylation increases the termination efficiency of RF2.

It localises to the cytoplasm. Peptide chain release factor 2 directs the termination of translation in response to the peptide chain termination codons UGA and UAA. This is Peptide chain release factor 2 from Haemophilus ducreyi (strain 35000HP / ATCC 700724).